Consider the following 1464-residue polypeptide: Nuclear pore complex protein NUP155 (1464 aa).

Serine 2 carries the N-acetylserine modification.

It belongs to the non-repetitive/WGA-negative nucleoporin family. Part of the nuclear pore complex (NPC). The NPC has an eight-fold symmetrical structure comprising a central transport channel and two rings, the cytoplasmic and nuclear rings, to which eight filaments are attached. The cytoplasmic filaments have loose ends, while the nuclear filaments are joined in a distal ring, forming a nuclear basket. NPCs are highly dynamic in configuration and composition, and can be devided in 3 subcomplexes, the NUP62 subcomplex, the NUP107-160 subcomplex and the NUP93 subcomplex, containing approximately 30 different nucleoporin proteins.

Its subcellular location is the nucleus. The protein localises to the nuclear pore complex. Functionally, major component of the nuclear pore complex (NPC). The chain is Nuclear pore complex protein NUP155 from Arabidopsis thaliana (Mouse-ear cress).